The chain runs to 235 residues: Phosphatidylserine decarboxylase proenzyme (235 aa).

The Schiff-base intermediate with substrate; via pyruvic acid role is filled by serine 204. Position 204 is a pyruvic acid (Ser); by autocatalysis (serine 204).

It belongs to the phosphatidylserine decarboxylase family. PSD-A subfamily. In terms of assembly, heterodimer of a large membrane-associated beta subunit and a small pyruvoyl-containing alpha subunit. Pyruvate serves as cofactor. Is synthesized initially as an inactive proenzyme. Formation of the active enzyme involves a self-maturation process in which the active site pyruvoyl group is generated from an internal serine residue via an autocatalytic post-translational modification. Two non-identical subunits are generated from the proenzyme in this reaction, and the pyruvate is formed at the N-terminus of the alpha chain, which is derived from the carboxyl end of the proenzyme. The post-translation cleavage follows an unusual pathway, termed non-hydrolytic serinolysis, in which the side chain hydroxyl group of the serine supplies its oxygen atom to form the C-terminus of the beta chain, while the remainder of the serine residue undergoes an oxidative deamination to produce ammonia and the pyruvoyl prosthetic group on the alpha chain.

It is found in the cell membrane. It carries out the reaction a 1,2-diacyl-sn-glycero-3-phospho-L-serine + H(+) = a 1,2-diacyl-sn-glycero-3-phosphoethanolamine + CO2. It functions in the pathway phospholipid metabolism; phosphatidylethanolamine biosynthesis; phosphatidylethanolamine from CDP-diacylglycerol: step 2/2. Catalyzes the formation of phosphatidylethanolamine (PtdEtn) from phosphatidylserine (PtdSer). This chain is Phosphatidylserine decarboxylase proenzyme, found in Mycobacterium sp. (strain KMS).